A 409-amino-acid polypeptide reads, in one-letter code: S-adenosylmethionine synthase (409 aa).

Residue His-15 participates in ATP binding. Asp-17 provides a ligand contact to Mg(2+). Glu-43 provides a ligand contact to K(+). Positions 56 and 100 each coordinate L-methionine. The segment at 100-110 is flexible loop; that stretch reads QSSDIAQGVNE. ATP contacts are provided by residues 171–173, 248–249, Asp-257, 263–264, Ala-280, and Lys-284; these read DGK, KF, and RK. L-methionine is bound at residue Asp-257. Residue Lys-288 participates in L-methionine binding.

This sequence belongs to the AdoMet synthase family. As to quaternary structure, homotetramer; dimer of dimers. It depends on Mg(2+) as a cofactor. K(+) serves as cofactor.

The protein resides in the cytoplasm. It carries out the reaction L-methionine + ATP + H2O = S-adenosyl-L-methionine + phosphate + diphosphate. It participates in amino-acid biosynthesis; S-adenosyl-L-methionine biosynthesis; S-adenosyl-L-methionine from L-methionine: step 1/1. In terms of biological role, catalyzes the formation of S-adenosylmethionine (AdoMet) from methionine and ATP. The overall synthetic reaction is composed of two sequential steps, AdoMet formation and the subsequent tripolyphosphate hydrolysis which occurs prior to release of AdoMet from the enzyme. This is S-adenosylmethionine synthase from Prochlorococcus marinus (strain NATL2A).